The chain runs to 86 residues: Colicin-E9 immunity protein (86 aa).

Belongs to the colicins ColE2/ColE8/ColE9 and pyocins S1/S2 family.

Functionally, this protein is able to protect a cell, which harbors the plasmid ColE9 encoding colicin E9, against colicin E9, it binds specifically to the DNase-type colicin and inhibits its bactericidal activity. This chain is Colicin-E9 immunity protein (imm), found in Escherichia coli.